A 360-amino-acid polypeptide reads, in one-letter code: Aminomethyltransferase (360 aa).

This sequence belongs to the GcvT family. In terms of assembly, the glycine cleavage system is composed of four proteins: P, T, L and H.

The enzyme catalyses N(6)-[(R)-S(8)-aminomethyldihydrolipoyl]-L-lysyl-[protein] + (6S)-5,6,7,8-tetrahydrofolate = N(6)-[(R)-dihydrolipoyl]-L-lysyl-[protein] + (6R)-5,10-methylene-5,6,7,8-tetrahydrofolate + NH4(+). Functionally, the glycine cleavage system catalyzes the degradation of glycine. The polypeptide is Aminomethyltransferase (Bdellovibrio bacteriovorus (strain ATCC 15356 / DSM 50701 / NCIMB 9529 / HD100)).